Here is an 83-residue protein sequence, read N- to C-terminus: Calsensin (83 aa).

EF-hand domains follow at residues 4-39 and 46-81; these read KVKA…LDAY and KVKE…LLCQ. Ca(2+)-binding residues include Asp17, Asn19, Asp21, Tyr23, Glu28, Asp59, Asn61, Asp63, Lys65, and Glu70.

Selectively expressed in a small group of neurons.

The protein resides in the cytoplasm. May function as a trigger protein which interacts with a larger protein. May mediate calcium-dependent signal transduction events in the growth cones and axons of a small group of sensory neurons which fasciculate in a single axon tract. The chain is Calsensin from Haemopis marmorata (Green horse leech).